Consider the following 347-residue polypeptide: GMP reductase (347 aa).

An NADP(+)-binding site is contributed by 108 to 131; the sequence is ADFEKTVQILALNPALNFVCIDVA. Residues Gly-181 and Gly-183 each coordinate K(+). The active-site Thioimidate intermediate is Cys-186. Residue 216–239 participates in NADP(+) binding; the sequence is IVSDGGCTMPGDVAKAFGGGADFV.

It belongs to the IMPDH/GMPR family. GuaC type 1 subfamily. In terms of assembly, homotetramer.

It carries out the reaction IMP + NH4(+) + NADP(+) = GMP + NADPH + 2 H(+). Its function is as follows. Catalyzes the irreversible NADPH-dependent deamination of GMP to IMP. It functions in the conversion of nucleobase, nucleoside and nucleotide derivatives of G to A nucleotides, and in maintaining the intracellular balance of A and G nucleotides. This chain is GMP reductase, found in Salmonella paratyphi C (strain RKS4594).